The primary structure comprises 439 residues: AT-hook motif nuclear-localized protein 13 (439 aa).

3 disordered regions span residues 1-46 (MDSR…NSYN), 69-216 (QRLP…LGGT), and 342-439 (GRKQ…NSPQ). 2 stretches are compositionally biased toward low complexity: residues 9–31 (QQQQQQQQQQQQQQQQQHLQQQQ) and 79–95 (PHQPQQHQYHHPQPQQQ). Residues 109–120 (SPSSVAATQQHS) are compositionally biased toward polar residues. Basic residues predominate over residues 130–139 (VKKKRGRPRK). Positions 131–139 (KKKRGRPRK) match the Bipartite nuclear localization signal motif. The a.T hook 1 DNA-binding region spans 131–143 (KKKRGRPRKYAAD). Composition is skewed to gly residues over residues 143-152 (DGGGGGGGGS) and 171-183 (YGGGNEGGGGGDS). The segment at residues 196–208 (KRNRGRPPGSGKK) is a DNA-binding region (a.T hook 2). A PPC domain is found at 217–359 (GGVGFTPHVI…GRAQNTPEPA (143 aa)). The segment covering 347 to 357 (QSAGRAQNTPE) has biased composition (polar residues). Composition is skewed to low complexity over residues 376–386 (SPRSQGQQHSS) and 403–416 (NNNNSNNHGIFGNS). A compositionally biased stretch (polar residues) spans 428-439 (MYQNLWPGNSPQ).

It localises to the nucleus. Its function is as follows. Transcription factor that specifically binds AT-rich DNA sequences related to the nuclear matrix attachment regions (MARs). The protein is AT-hook motif nuclear-localized protein 13 of Arabidopsis thaliana (Mouse-ear cress).